Consider the following 273-residue polypeptide: 6-carboxyhexanoate--CoA ligase (273 aa).

This sequence belongs to the BioW family. As to quaternary structure, homodimer. Mg(2+) serves as cofactor.

It carries out the reaction heptanedioate + ATP + CoA = 6-carboxyhexanoyl-CoA + AMP + diphosphate. It participates in metabolic intermediate metabolism; pimeloyl-CoA biosynthesis; pimeloyl-CoA from pimelate: step 1/1. Functionally, catalyzes the transformation of pimelate into pimeloyl-CoA with concomitant hydrolysis of ATP to AMP. In Alkalihalophilus pseudofirmus (strain ATCC BAA-2126 / JCM 17055 / OF4) (Bacillus pseudofirmus), this protein is 6-carboxyhexanoate--CoA ligase.